Here is a 1757-residue protein sequence, read N- to C-terminus: MDSQDHKAPGFVDIVKSWIPRKSESSNMSRDFWMPDQSCPVCYECDAQFTVFNRRHHCRLCGRVFCAKCAANSIPSPSDETKDSHEEPERIRVCNYCYKQWEQGIVPPDNGASIISLHFSSSPSARSVASTTSNSSNCTIDSTAGPSPRPKMNPRASRRVSSNMDSEKSEQQNAKSRRSSDHYGHVLDSSDNQVEFFVNSSGRSDGEADDDDDYQSDFAQSYAQGNDYYGAINLDEVDHIYGSHEAHDVGVKIEPNISGFPPDQDLDSLNTETIDKTRQQENGWNDVKEGSPPCEESFEPEVVDFESDGLLWLPPEPENEEDEREAVLSDDDGDEGDRGDWGYLRPSNSFNEKDFHSKDKSSGAMKNVVEGHFRALVAQLLEVDNLPMVNEGDEEGWLDIITSLSWEAATLLKPDTSKSGGMDPGGYVKVKCIPCGRRSESMVVKGVVCKKNVAHRRMTSKIEKPRLLILGGALEYQRISNQLSSFDTLLQQEMDHLKMAVAKIDSHNPDILLVEKSVSRFAQEYLLAKDISLVLNIKRSLLERISRCTGAQIVPSIDQLTSPKLGYCDLFHVEKFVETHVSPCQVAKKMAKTLMFFDGCPKPLGCTILLKGAHEDELKKVKHVIQYGVFAAYHLALETSFLADEGASIHELPLQTPITVALPDKPSMVNRSISTIPGFTVSSAEKSPTTELRGEPHKANGDLTGNFTSSKTHFQGKLDGNDRIDPSERLLHNLDTVYCKPPETITSKDDGLVPTLESRQLSFHVEEPSVQKDQWSVLSGATEQVTDGGYTNDSAVIGNQNFNRQEQMESSKGDFHPSASDHQSILVSLSTRCVWKGSVCERAHLLRIKYYGSFDKPLGRFLRDNLFDQDQCCPSCTMPAEAHIHCYTHRQGSLTISVKKLPELLPGQREGKIWMWHRCLKCPRINGFPPATRRIVMSDAAWGLSFGKFLELSFSNHAAASRVANCGHSLHRDCLRFYGFGRMVACFRYASINIYAVTLPPAKLYFNYENQEWLQKESKEVIKKAEVLFNEVQEALSQISAKTMGAGSKGSTPNKIKLSLEELAGLLEQRKKEYKDSLQQMLNVVKDGQPTIDILLINKLRRLIIFDSYAWDECLAGAANMVRNNYLEAPKNSAPKVMGRNVSLEKLSDEKVKSIPTHVAICNDSLLQDADYETCLNQGKSFADTSGKFAIPEDVGSDRPPDCRMEFDPSEGGKDNFVESSQVVKPAHTESQFQATDLSDTLDAAWIGEQTTSENGIFRPPSRAASTNGTQIPDLRLLGSESELNFKGGPTNDEHTTQVQLPSPSFYYSLNKNYSLNSRKHIMAEDRPVYVSSYRELEWRSGARLLLPLGCNDLVLPVYDDEPTSIIAYALTSSEYKAQMSGSDKSRDRLDSGGSFSLFDSVNLLSLNSLSDLSVDMSRSLSSADEQVSQLLHSSLYLKDLHARISFTDEGPPGKVKYSVTCYYAKEFEALRMICCPSETDFIRSLGRCRKWGAQGGKSNVFFAKSLDDRFIIKQVTKTELESFIKFGPAYFKYLTESISTKSPTSLAKILGIYQVSSKHLKGGKEFKMDVLVMENLLFKRNFTRLYDLKGSTRARYNPDTSGSNTVLLDQNLVEAMPTSPIFVGSKAKRLLERAVWNDTSFLASIHVMDYSLLVGVDEERNELVLGIIDFMRQYTWDKHLETWVKTSGLLGGPKNSTPTVISPQQYKKRFRKAMTAYFLMVPDQWSPAAVVPSNSSSAEVKEEEEKDNPQAVGNKS.

Residues Asp36–Glu102 form an FYVE-type zinc finger. Residues Cys42, Cys45, Cys58, Cys61, Cys66, Cys69, Cys94, and Cys97 each coordinate Zn(2+). Disordered regions lie at residues Ala125 to Gln193, Lys276 to Ser297, Leu313 to Pro346, and Ala684 to Ser709. The span at Asn134–Gly145 shows a compositional bias: polar residues. A compositionally biased stretch (acidic residues) spans Pro317–Asp337. Residues Leu1014 to Asp1087 adopt a coiled-coil conformation. The PIPK domain occupies Ser1395–Phe1719. Residues Ala1729 to Ala1739 show a composition bias toward low complexity. The segment at Ala1729–Ser1757 is disordered.

In terms of assembly, component of the PI(3,5)P2 regulatory complex at least composed of ATG18, SAC/FIG4, FAB1 and VAC14. Mg(2+) is required as a cofactor. It depends on Mn(2+) as a cofactor. As to expression, ubiquitous with highest expression levels in pollen, seed, and senescent leaves.

It is found in the endosome membrane. It carries out the reaction a 1,2-diacyl-sn-glycero-3-phospho-(1D-myo-inositol-3-phosphate) + ATP = a 1,2-diacyl-sn-glycero-3-phospho-(1D-myo-inositol-3,5-bisphosphate) + ADP + H(+). In terms of biological role, the PI(3,5)P2 regulatory complex regulates both the synthesis and turnover of phosphatidylinositol 3,5-bisphosphate (PtdIns(3,5)P2). Catalyzes the phosphorylation of phosphatidylinositol 3-phosphate on the fifth hydroxyl of the myo-inositol ring, to form phosphatidylinositol 3,5-bisphosphate. Plays an important role in maintenance of endomembrane homeostasis including endocytosis, vacuole formation, and vacuolar acidification processes. Required for development of viable pollen. Might mediate recycling of auxin transporters. The chain is 1-phosphatidylinositol-3-phosphate 5-kinase FAB1A (FAB1A) from Arabidopsis thaliana (Mouse-ear cress).